The primary structure comprises 318 residues: Melanocyte-stimulating hormone receptor (318 aa).

At 1-37 the chain is on the extracellular side; it reads MPMQGAQRKLLGSLNSTPTATSNLGLAANRTGAPCLE. N-linked (GlcNAc...) asparagine glycosylation occurs at Asn29. A helical transmembrane segment spans residues 38 to 63; that stretch reads LPIPNGLFLSLGLVSLVENVLVVAAI. Residues 64 to 72 are Cytoplasmic-facing; that stretch reads AKNRNLHSS. A helical transmembrane segment spans residues 73-93; the sequence is MYCFICCLALSDLLVSGSNML. The Extracellular segment spans residues 94 to 118; that stretch reads ETAVILLLEAGVLATRASVVQQLHN. The helical transmembrane segment at 119-140 threads the bilayer; the sequence is TIDVLTCSSMLCSLCFLGAIAV. Residues 141-163 are Cytoplasmic-facing; it reads DRYISIFYALRYHSIMTLPRAQR. The chain crosses the membrane as a helical span at residues 164 to 183; that stretch reads AVAAIWVASVLSSTLFITYY. Topologically, residues 184–191 are extracellular; it reads DHAAVLLC. The chain crosses the membrane as a helical span at residues 192-211; the sequence is LMVFFLAMLVLMAVLYVHML. Topologically, residues 212 to 240 are cytoplasmic; it reads ARARQHAQGIIRLHKRQPPAHKGFGLRGA. The chain crosses the membrane as a helical span at residues 241–266; it reads ATLTILLGIFFLCWGPFFLCLTLVVF. At 267–279 the chain is on the extracellular side; the sequence is CPQHLTCNCIFKN. Residues 280–300 traverse the membrane as a helical segment; the sequence is FKVFLTLIICNTIIDPLIYAF. Over 301–317 the chain is Cytoplasmic; the sequence is RSQELRRMLKEVLGRGR.

This sequence belongs to the G-protein coupled receptor 1 family. As to quaternary structure, interacts with MGRN1, but does not undergo MGRN1-mediated ubiquitination; this interaction competes with GNAS-binding and thus inhibits agonist-induced cAMP production. Interacts with OPN3; the interaction results in a decrease in MC1R-mediated cAMP signaling and ultimately a decrease in melanin production in melanocytes.

Its subcellular location is the cell membrane. Its function is as follows. Receptor for MSH (alpha, beta and gamma) and ACTH. The activity of this receptor is mediated by G proteins which activate adenylate cyclase. Mediates melanogenesis, the production of eumelanin (black/brown) and phaeomelanin (red/yellow), via regulation of cAMP signaling in melanocytes. The sequence is that of Melanocyte-stimulating hormone receptor (MC1R) from Leontopithecus rosalia (Golden lion tamarin).